Here is a 103-residue protein sequence, read N- to C-terminus: Nucleoid-associated protein NIS_0256 (103 aa).

The protein belongs to the YbaB/EbfC family. As to quaternary structure, homodimer.

It localises to the cytoplasm. The protein localises to the nucleoid. In terms of biological role, binds to DNA and alters its conformation. May be involved in regulation of gene expression, nucleoid organization and DNA protection. The protein is Nucleoid-associated protein NIS_0256 of Nitratiruptor sp. (strain SB155-2).